A 456-amino-acid polypeptide reads, in one-letter code: uncharacterized protein (456 aa).

The next 11 membrane-spanning stretches (helical) occupy residues 12–32, 63–83, 86–106, 143–163, 179–199, 208–228, 237–257, 305–325, 348–368, 390–410, and 414–434; these read SFIW…YLTL, FAAL…VGVA, VQAG…LGMA, WLAK…IGTF, IPVL…ILGG, SVIV…IILL, ILLI…AVGL, FLDT…TGAW, IGAT…ILGW, LAYI…IWII, and VNGL…KVII.

It belongs to the alanine or glycine:cation symporter (AGCS) (TC 2.A.25) family.

The protein localises to the cell inner membrane. This is an uncharacterized protein from Haemophilus influenzae (strain ATCC 51907 / DSM 11121 / KW20 / Rd).